Here is a 114-residue protein sequence, read N- to C-terminus: Ribosome-binding factor A (114 aa).

This sequence belongs to the RbfA family. In terms of assembly, monomer. Binds 30S ribosomal subunits, but not 50S ribosomal subunits or 70S ribosomes.

It localises to the cytoplasm. In terms of biological role, one of several proteins that assist in the late maturation steps of the functional core of the 30S ribosomal subunit. Associates with free 30S ribosomal subunits (but not with 30S subunits that are part of 70S ribosomes or polysomes). Required for efficient processing of 16S rRNA. May interact with the 5'-terminal helix region of 16S rRNA. This Staphylococcus saprophyticus subsp. saprophyticus (strain ATCC 15305 / DSM 20229 / NCIMB 8711 / NCTC 7292 / S-41) protein is Ribosome-binding factor A.